The following is a 322-amino-acid chain: NADH-quinone oxidoreductase subunit H (322 aa).

The next 8 membrane-spanning stretches (helical) occupy residues 15 to 35, 82 to 102, 114 to 134, 149 to 169, 186 to 206, 243 to 263, 265 to 285, and 302 to 322; these read ILHI…LSIL, IFIL…PTIP, IGIL…LFAG, ASAQ…GVIA, VWNV…GIAL, ISII…YFGF, GSSF…FILI, and WKIC…FILI.

Belongs to the complex I subunit 1 family. In terms of assembly, NDH-1 is composed of 13 different subunits. Subunits NuoA, H, J, K, L, M, N constitute the membrane sector of the complex.

It localises to the cell membrane. It carries out the reaction a quinone + NADH + 5 H(+)(in) = a quinol + NAD(+) + 4 H(+)(out). In terms of biological role, NDH-1 shuttles electrons from NADH, via FMN and iron-sulfur (Fe-S) centers, to quinones in the respiratory chain. The immediate electron acceptor for the enzyme in this species is believed to be ubiquinone. Couples the redox reaction to proton translocation (for every two electrons transferred, four hydrogen ions are translocated across the cytoplasmic membrane), and thus conserves the redox energy in a proton gradient. This subunit may bind ubiquinone. The chain is NADH-quinone oxidoreductase subunit H from Buchnera aphidicola subsp. Schizaphis graminum (strain Sg).